Here is a 202-residue protein sequence, read N- to C-terminus: Glycerol-3-phosphate acyltransferase (202 aa).

4 helical membrane passes run alanine 2 to valine 22, leucine 80 to valine 100, alanine 119 to phenylalanine 139, and valine 158 to isoleucine 178.

Belongs to the PlsY family. In terms of assembly, probably interacts with PlsX.

It localises to the cell inner membrane. It catalyses the reaction an acyl phosphate + sn-glycerol 3-phosphate = a 1-acyl-sn-glycero-3-phosphate + phosphate. It functions in the pathway lipid metabolism; phospholipid metabolism. Functionally, catalyzes the transfer of an acyl group from acyl-phosphate (acyl-PO(4)) to glycerol-3-phosphate (G3P) to form lysophosphatidic acid (LPA). This enzyme utilizes acyl-phosphate as fatty acyl donor, but not acyl-CoA or acyl-ACP. This chain is Glycerol-3-phosphate acyltransferase, found in Cupriavidus necator (strain ATCC 17699 / DSM 428 / KCTC 22496 / NCIMB 10442 / H16 / Stanier 337) (Ralstonia eutropha).